The chain runs to 327 residues: Gibberellin 2-beta-dioxygenase 1 (327 aa).

One can recognise a Fe2OG dioxygenase domain in the interval 171–276; that stretch reads QSDCLFRVNH…RLSMIYFCGP (106 aa). Fe cation is bound by residues His200, Asp202, and His257. Arg267 is an active-site residue.

It belongs to the iron/ascorbate-dependent oxidoreductase family. GA2OX subfamily. Fe cation serves as cofactor. In terms of tissue distribution, predominantly expressed in roots, flowers, young fruits and seeds.

It catalyses the reaction gibberellin A1 + 2-oxoglutarate + O2 = gibberellin A8 + succinate + CO2. It participates in plant hormone biosynthesis; gibberellin biosynthesis. Catalyzes the 2-beta-hydroxylation of several biologically active gibberellins, leading to the homeostatic regulation of their endogenous level. Catabolism of gibberellins (GAs) plays a central role in plant development. Converts GA9/GA20 to GA51/GA29 and GA4/GA1 to GA34/GA8. In Pisum sativum (Garden pea), this protein is Gibberellin 2-beta-dioxygenase 1 (GA2OX1).